The chain runs to 303 residues: MSFAQILRGSRAMASPKCLPESNYSTSHLRFPRLQSITSKKNSRARGDWGLKRTLPKIKTRYICVRQQDSLYKQADFQSSAKFVRLVRNWFDAGFVRDPSEVALLQELLKETGLKDTRDINKVFSPSKQSDENDNFRRYGVSGGIQYSNVPLINSRVTPNCESNCSNIRRRLTAHIISSDASTAYYGLGGLILRLPRTVVFNRNRSSPLFSQEQRISYTVYKNGRLRLVPFSGPELETHLAYPSEDSEVESFFNRDIQLVAKRDSSLDAPVSYQRGIMKFFMAPSQTSNNEANSSEKDNLSNS.

Ser2 carries the N-acetylserine modification. The transit peptide at 2 to 13 (SFAQILRGSRAM) directs the protein to the mitochondrion; not cleaved.

This sequence belongs to the bacterial ribosomal protein bS1 family. Component of the mitochondrial small ribosomal subunit (mt-SSU). Mature yeast 74S mitochondrial ribosomes consist of a small (37S) and a large (54S) subunit. The 37S small subunit contains a 15S ribosomal RNA (15S mt-rRNA) and at least 32 different proteins. The 54S large subunit contains a 21S rRNA (21S mt-rRNA) and at least 45 different proteins. This subunit is mutually exclusive with mug178/small ribosomal subunit protein L51-b.

Its subcellular location is the mitochondrion. Its function is as follows. Component of the mitochondrial ribosome (mitoribosome), a dedicated translation machinery responsible for the synthesis of mitochondrial genome-encoded proteins, including at least some of the essential transmembrane subunits of the mitochondrial respiratory chain. The mitoribosomes are attached to the mitochondrial inner membrane and translation products are cotranslationally integrated into the membrane. bS1m functionally interacts with the 5'-UTR of mitochondrial mRNAs. Plays an essential role in mitochondrial translation. The sequence is that of Small ribosomal subunit protein bS1m (mrp51) from Schizosaccharomyces pombe (strain 972 / ATCC 24843) (Fission yeast).